The following is a 22-amino-acid chain: Cysteine-rich venom protein notescatin (22 aa).

Positions 1–15 (SNKKDYQKEIVDKHN) are enriched in basic and acidic residues. Positions 1–22 (SNKKDYQKEIVDKHNALRRSVK) are disordered.

It belongs to the CRISP family. In terms of processing, contains 8 disulfide bonds. As to expression, expressed by the venom gland.

The protein resides in the secreted. This is Cysteine-rich venom protein notescatin from Notechis scutatus scutatus (Mainland tiger snake).